Consider the following 147-residue polypeptide: Peptide deformylase (147 aa).

Residues C88 and H130 each coordinate Fe cation. E131 is an active-site residue. Position 134 (H134) interacts with Fe cation.

Belongs to the polypeptide deformylase family. The cofactor is Fe(2+).

It carries out the reaction N-terminal N-formyl-L-methionyl-[peptide] + H2O = N-terminal L-methionyl-[peptide] + formate. Functionally, removes the formyl group from the N-terminal Met of newly synthesized proteins. Requires at least a dipeptide for an efficient rate of reaction. N-terminal L-methionine is a prerequisite for activity but the enzyme has broad specificity at other positions. This is Peptide deformylase from Alkaliphilus metalliredigens (strain QYMF).